The primary structure comprises 383 residues: N-acetyldiaminopimelate deacetylase (383 aa).

D72 is an active-site residue. The active-site Proton acceptor is the E131.

It belongs to the peptidase M20A family. N-acetyldiaminopimelate deacetylase subfamily.

The catalysed reaction is N-acetyl-(2S,6S)-2,6-diaminopimelate + H2O = (2S,6S)-2,6-diaminopimelate + acetate. Its pathway is amino-acid biosynthesis; L-lysine biosynthesis via DAP pathway; LL-2,6-diaminopimelate from (S)-tetrahydrodipicolinate (acetylase route): step 3/3. Functionally, catalyzes the conversion of N-acetyl-diaminopimelate to diaminopimelate and acetate. The protein is N-acetyldiaminopimelate deacetylase of Lacticaseibacillus paracasei (strain ATCC 334 / BCRC 17002 / CCUG 31169 / CIP 107868 / KCTC 3260 / NRRL B-441) (Lactobacillus paracasei).